The primary structure comprises 254 residues: Pimeloyl-[acyl-carrier protein] methyl ester esterase (254 aa).

Substrate is bound by residues W20, 80–81 (SL), and 141–145 (FLALQ). S80 serves as the catalytic Nucleophile. Active-site residues include D205 and H233. H233 is a substrate binding site.

This sequence belongs to the AB hydrolase superfamily. Carboxylesterase BioH family. As to quaternary structure, monomer.

Its subcellular location is the cytoplasm. The catalysed reaction is 6-carboxyhexanoyl-[ACP] methyl ester + H2O = 6-carboxyhexanoyl-[ACP] + methanol + H(+). The protein operates within cofactor biosynthesis; biotin biosynthesis. Its function is as follows. The physiological role of BioH is to remove the methyl group introduced by BioC when the pimeloyl moiety is complete. It allows to synthesize pimeloyl-ACP via the fatty acid synthetic pathway through the hydrolysis of the ester bonds of pimeloyl-ACP esters. The sequence is that of Pimeloyl-[acyl-carrier protein] methyl ester esterase from Methylococcus capsulatus (strain ATCC 33009 / NCIMB 11132 / Bath).